Consider the following 354-residue polypeptide: Protein Wnt-11 (354 aa).

The N-terminal stretch at 1 to 24 (MRARPQVCEALLFALALHTGVCYG) is a signal peptide. Asn40 and Asn90 each carry an N-linked (GlcNAc...) asparagine glycan. 3 cysteine pairs are disulfide-bonded: Cys80/Cys91, Cys130/Cys138, and Cys140/Cys157. The N-linked (GlcNAc...) asparagine glycan is linked to Asn160. Cystine bridges form between Cys209-Cys223, Cys211-Cys218, Cys283-Cys314, Cys299-Cys309, Cys313-Cys353, Cys329-Cys344, Cys331-Cys341, and Cys336-Cys337. Ser215 carries the O-palmitoleoyl serine; by PORCN lipid modification. 2 N-linked (GlcNAc...) asparagine glycosylation sites follow: Asn300 and Asn304.

Belongs to the Wnt family. Post-translationally, palmitoleoylation is required for efficient binding to frizzled receptors. Depalmitoleoylation leads to Wnt signaling pathway inhibition.

The protein localises to the secreted. The protein resides in the extracellular space. It localises to the extracellular matrix. In terms of biological role, ligand for members of the frizzled family of seven transmembrane receptors. Probable developmental protein. May be a signaling molecule which affects the development of discrete regions of tissues. Is likely to signal over only few cell diameters. In Mus musculus (Mouse), this protein is Protein Wnt-11 (Wnt11).